A 455-amino-acid chain; its full sequence is Serine--tRNA ligase (455 aa).

Residue 252–254 coordinates L-serine; it reads TAE. ATP contacts are provided by residues 283-285 and Val299; that span reads RKE. Glu306 contacts L-serine. An ATP-binding site is contributed by 370–373; the sequence is EVVS. Thr406 lines the L-serine pocket.

It belongs to the class-II aminoacyl-tRNA synthetase family. Type-1 seryl-tRNA synthetase subfamily. Homodimer. The tRNA molecule binds across the dimer.

It is found in the cytoplasm. The catalysed reaction is tRNA(Ser) + L-serine + ATP = L-seryl-tRNA(Ser) + AMP + diphosphate + H(+). The enzyme catalyses tRNA(Sec) + L-serine + ATP = L-seryl-tRNA(Sec) + AMP + diphosphate + H(+). It participates in aminoacyl-tRNA biosynthesis; selenocysteinyl-tRNA(Sec) biosynthesis; L-seryl-tRNA(Sec) from L-serine and tRNA(Sec): step 1/1. Catalyzes the attachment of serine to tRNA(Ser). Is also able to aminoacylate tRNA(Sec) with serine, to form the misacylated tRNA L-seryl-tRNA(Sec), which will be further converted into selenocysteinyl-tRNA(Sec). This Thermococcus gammatolerans (strain DSM 15229 / JCM 11827 / EJ3) protein is Serine--tRNA ligase.